A 147-amino-acid chain; its full sequence is 3-dehydroquinate dehydratase (147 aa).

Tyr-24 functions as the Proton acceptor in the catalytic mechanism. Asn-75, His-81, and Asp-88 together coordinate substrate. His-101 serves as the catalytic Proton donor. Substrate is bound by residues 102-103 and Arg-112; that span reads IS.

The protein belongs to the type-II 3-dehydroquinase family. In terms of assembly, homododecamer.

It catalyses the reaction 3-dehydroquinate = 3-dehydroshikimate + H2O. It participates in metabolic intermediate biosynthesis; chorismate biosynthesis; chorismate from D-erythrose 4-phosphate and phosphoenolpyruvate: step 3/7. Catalyzes a trans-dehydration via an enolate intermediate. This chain is 3-dehydroquinate dehydratase, found in Cereibacter sphaeroides (strain KD131 / KCTC 12085) (Rhodobacter sphaeroides).